Here is a 341-residue protein sequence, read N- to C-terminus: Probable long-chain-alcohol O-fatty-acyltransferase 9 (341 aa).

7 helical membrane-spanning segments follow: residues 9–29, 36–56, 82–102, 122–142, 146–166, 231–251, and 295–315; these read IIVWISAIISVSYCYYISANI, LFSVLPICGLFFVLPLFFSSV, GPLFPVAPNLIQFVCFTCFPI, FAIKIMIFGVVLHVYNYSHFL, VLLSLCFLHLYVELEILLGPL, MGYLVTFLVSGLFHELVYFYI, and RLLTMGFVVVTGGLLFFPLFI.

This sequence belongs to the wax synthase family.

The protein localises to the membrane. The enzyme catalyses a long chain fatty alcohol + a fatty acyl-CoA = a wax ester + CoA. Catalyzes the final step in the synthesis of long-chain linear esters (waxes). The sequence is that of Probable long-chain-alcohol O-fatty-acyltransferase 9 from Arabidopsis thaliana (Mouse-ear cress).